A 390-amino-acid polypeptide reads, in one-letter code: LIM/homeobox protein Lhx4 (390 aa).

LIM zinc-binding domains follow at residues 28–87 (PQCA…RFGT) and 88–150 (KCTA…AKQN). Residues 157–216 (AKRPRTTITAKQLETLKNAYKNSPKPARHVREQLSSETGLDMRVVQVWFQNRRAKEKRLK) constitute a DNA-binding region (homeobox). An interaction with DNA region spans residues 161–181 (RTTITAKQLETLKNAYKNSPK). Residues 199–211 (RVVQVWFQNRRAK) are interaction with 5-mCpG DNA. Disordered stretches follow at residues 231 to 253 (VKRS…GVSD) and 355 to 390 (MAGG…HPPF).

As to expression, transient expression in ventrolateral regions of the developing neural tube and hindbrain.

The protein localises to the nucleus. Its function is as follows. May play a critical role in the development of respiratory control mechanisms and in the normal growth and maturation of the lung. Binds preferentially to methylated DNA. The protein is LIM/homeobox protein Lhx4 (Lhx4) of Mus musculus (Mouse).